Here is a 319-residue protein sequence, read N- to C-terminus: Ribosomal RNA small subunit methyltransferase H (319 aa).

S-adenosyl-L-methionine is bound by residues 52–54 (GGH), D70, F100, D126, and Q133. Residues 289 to 319 (PKPLSPSELERQRNPRARSAKLRVAARSSQM) are disordered.

The protein belongs to the methyltransferase superfamily. RsmH family.

The protein resides in the cytoplasm. It catalyses the reaction cytidine(1402) in 16S rRNA + S-adenosyl-L-methionine = N(4)-methylcytidine(1402) in 16S rRNA + S-adenosyl-L-homocysteine + H(+). Its function is as follows. Specifically methylates the N4 position of cytidine in position 1402 (C1402) of 16S rRNA. In Synechococcus sp. (strain JA-2-3B'a(2-13)) (Cyanobacteria bacterium Yellowstone B-Prime), this protein is Ribosomal RNA small subunit methyltransferase H.